The sequence spans 334 residues: Heat shock factor 2-binding protein (334 aa).

An interaction with BRME1 region spans residues 14–51 (MGTKEEFVKVRKKDLERLTTEVMQIRDFLPRILNGEVL). A coiled-coil region spans residues 49-122 (EVLESFQKLK…LLQQAEYCTE (74 aa)). Positions 83 to 334 (ARLETVQADN…EDLRTLEHNV (252 aa)) are interaction with BRCA2.

As to quaternary structure, associates with HSF2. The interaction seems to occur between the trimerization domain of HSF2 and the N-terminal hydrophilic region of HSF2BP. Interacts (via C-terminus) with BNC1. Interacts (via N-terminus) with BRCA2 and BRME1; the interactions are direct and allow the formation of a ternary complex. The complex BRME1:HSF2BP:BRCA2 interacts with SPATA22, MEIOB and RAD51. Sumoylated by UBE2I in response to MEKK1-mediated stimuli. In terms of tissue distribution, testis specific. Overexpressed in some tumors.

The protein resides in the cytoplasm. Its subcellular location is the chromosome. Meiotic recombination factor component of recombination bridges involved in meiotic double-strand break repair. Modulates the localization of recombinases DMC1:RAD51 to meiotic double-strand break (DSB) sites through the interaction with BRCA2 and its recruitment during meiotic recombination. Indispensable for the DSB repair, homologous synapsis, and crossover formation that are needed for progression past metaphase I, is essential for spermatogenesis and male fertility. Required for proper recombinase recruitment in female meiosis. Inhibits BNC1 transcriptional activity during spermatogenesis, probably by sequestering it in the cytoplasm. May be involved in modulating HSF2 activation in testis. This Homo sapiens (Human) protein is Heat shock factor 2-binding protein.